A 1597-amino-acid polypeptide reads, in one-letter code: Mitogen-activated protein kinase kinase kinase 4 (1597 aa).

Disordered stretches follow at residues 1–128 (MRDA…VETV) and 424–465 (SPRP…PRVP). Over residues 59-69 (SDPEDFSDETN) the composition is skewed to acidic residues. Position 77 is a phosphoserine (serine 77). Basic residues predominate over residues 84–94 (QMKRLSAKHQR). Residue serine 424 is modified to Phosphoserine. Threonine 440 bears the Phosphothreonine mark. At serine 449 the chain carries Phosphoserine. Over residues 449–458 (SGTEESDEEP) the composition is skewed to acidic residues. Phosphothreonine is present on threonine 451. 2 positions are modified to phosphoserine: serine 454 and serine 492. 3 disordered regions span residues 1137 to 1157 (RPVK…IIPT), 1190 to 1220 (AAGR…SVPE), and 1233 to 1263 (FRSL…TRRS). The segment covering 1210–1219 (APDTRGSSVP) has biased composition (polar residues). 2 positions are modified to phosphoserine: serine 1241 and serine 1263. Residues 1241–1250 (SPTEERDEPA) are compositionally biased toward basic and acidic residues. A Protein kinase domain is found at 1332-1590 (WQRGNKIGEG…ASQLLDHAFV (259 aa)). Residues 1338-1346 (IGEGQYGKV) and lysine 1361 each bind ATP. Aspartate 1452 (proton acceptor) is an active-site residue.

The protein belongs to the protein kinase superfamily. STE Ser/Thr protein kinase family. MAP kinase kinase kinase subfamily. As to quaternary structure, monomer and homodimer. Homodimerization enhances kinase activity. Interacts with CDC42. Interacts with TRAF4; this promotes homodimerization. Binds both upstream activators and downstream substrates in multimolecular complexes. Interacts with AXIN1 and DIXDC1; interaction with DIXDC1 prevents interaction with AXIN1. Interacts with GADD45 and MAP2K6. Interacts with ZFP36; this interaction enhances the association with SH3KBP1/CIN85. Interacts with SH3KBP1; this interaction enhances the association with ZFP36. Mg(2+) serves as cofactor. In terms of tissue distribution, widely expressed. High expression was found in skeletal muscle, kidney, testis followed by heart brain and lung. Low expression was found in spleen.

Its subcellular location is the cytoplasm. The protein localises to the perinuclear region. The enzyme catalyses L-seryl-[protein] + ATP = O-phospho-L-seryl-[protein] + ADP + H(+). It carries out the reaction L-threonyl-[protein] + ATP = O-phospho-L-threonyl-[protein] + ADP + H(+). N-terminal autoinhibitory domain interacts with the C-terminal kinase domain, inhibiting kinase activity, and preventing interaction with its substrate, MAP2K6. The GADD45 proteins activate the kinase by binding to the N-terminal domain. Activated by phosphorylation on Thr-1494. In terms of biological role, component of a protein kinase signal transduction cascade. Activates the CSBP2, P38 and JNK MAPK pathways, but not the ERK pathway. Specifically phosphorylates and activates MAP2K4 and MAP2K6. This chain is Mitogen-activated protein kinase kinase kinase 4 (Map3k4), found in Mus musculus (Mouse).